Reading from the N-terminus, the 229-residue chain is 7-cyano-7-deazaguanine synthase (229 aa).

ATP is bound at residue 8-18; the sequence is CSGGLDSSVIA. Zn(2+) contacts are provided by Cys-190, Cys-203, Cys-206, and Cys-209.

Belongs to the QueC family. Zn(2+) is required as a cofactor.

The enzyme catalyses 7-carboxy-7-deazaguanine + NH4(+) + ATP = 7-cyano-7-deazaguanine + ADP + phosphate + H2O + H(+). The protein operates within purine metabolism; 7-cyano-7-deazaguanine biosynthesis. Functionally, catalyzes the ATP-dependent conversion of 7-carboxy-7-deazaguanine (CDG) to 7-cyano-7-deazaguanine (preQ(0)). This chain is 7-cyano-7-deazaguanine synthase, found in Methanopyrus kandleri (strain AV19 / DSM 6324 / JCM 9639 / NBRC 100938).